Here is a 33-residue protein sequence, read N- to C-terminus: Actin (33 aa).

Belongs to the actin family.

It localises to the cytoplasm. The protein resides in the cytoskeleton. The enzyme catalyses ATP + H2O = ADP + phosphate + H(+). Actins are highly conserved proteins that are involved in various types of cell motility and are ubiquitously expressed in all eukaryotic cells. This is Actin from Dictyocaulus viviparus (Bovine lungworm).